Consider the following 413-residue polypeptide: Histidine--tRNA ligase (413 aa).

The protein belongs to the class-II aminoacyl-tRNA synthetase family. Homodimer.

It localises to the cytoplasm. It carries out the reaction tRNA(His) + L-histidine + ATP = L-histidyl-tRNA(His) + AMP + diphosphate + H(+). This chain is Histidine--tRNA ligase, found in Ehrlichia chaffeensis (strain ATCC CRL-10679 / Arkansas).